Reading from the N-terminus, the 264-residue chain is Thymidylate synthase (264 aa).

Arginine 21 provides a ligand contact to dUMP. A (6R)-5,10-methylene-5,6,7,8-tetrahydrofolate-binding site is contributed by histidine 51. Cysteine 146 serves as the catalytic Nucleophile. DUMP is bound by residues arginine 166 to aspartate 169, asparagine 177, and histidine 207 to tyrosine 209. Residue aspartate 169 participates in (6R)-5,10-methylene-5,6,7,8-tetrahydrofolate binding. Residue alanine 263 coordinates (6R)-5,10-methylene-5,6,7,8-tetrahydrofolate.

It belongs to the thymidylate synthase family. Bacterial-type ThyA subfamily. In terms of assembly, homodimer.

It localises to the cytoplasm. It carries out the reaction dUMP + (6R)-5,10-methylene-5,6,7,8-tetrahydrofolate = 7,8-dihydrofolate + dTMP. The protein operates within pyrimidine metabolism; dTTP biosynthesis. Functionally, catalyzes the reductive methylation of 2'-deoxyuridine-5'-monophosphate (dUMP) to 2'-deoxythymidine-5'-monophosphate (dTMP) while utilizing 5,10-methylenetetrahydrofolate (mTHF) as the methyl donor and reductant in the reaction, yielding dihydrofolate (DHF) as a by-product. This enzymatic reaction provides an intracellular de novo source of dTMP, an essential precursor for DNA biosynthesis. In Brucella canis (strain ATCC 23365 / NCTC 10854 / RM-666), this protein is Thymidylate synthase.